Reading from the N-terminus, the 488-residue chain is Protein nucleotidyltransferase YdiU (488 aa).

ATP contacts are provided by Gly-90, Gly-92, Arg-93, Lys-113, Asp-125, Gly-126, Arg-176, and Arg-183. The active-site Proton acceptor is Asp-252. Mg(2+)-binding residues include Asn-253 and Asp-262. An ATP-binding site is contributed by Asp-262.

Belongs to the SELO family. It depends on Mg(2+) as a cofactor. Mn(2+) is required as a cofactor.

The enzyme catalyses L-seryl-[protein] + ATP = 3-O-(5'-adenylyl)-L-seryl-[protein] + diphosphate. It catalyses the reaction L-threonyl-[protein] + ATP = 3-O-(5'-adenylyl)-L-threonyl-[protein] + diphosphate. The catalysed reaction is L-tyrosyl-[protein] + ATP = O-(5'-adenylyl)-L-tyrosyl-[protein] + diphosphate. It carries out the reaction L-histidyl-[protein] + UTP = N(tele)-(5'-uridylyl)-L-histidyl-[protein] + diphosphate. The enzyme catalyses L-seryl-[protein] + UTP = O-(5'-uridylyl)-L-seryl-[protein] + diphosphate. It catalyses the reaction L-tyrosyl-[protein] + UTP = O-(5'-uridylyl)-L-tyrosyl-[protein] + diphosphate. Nucleotidyltransferase involved in the post-translational modification of proteins. It can catalyze the addition of adenosine monophosphate (AMP) or uridine monophosphate (UMP) to a protein, resulting in modifications known as AMPylation and UMPylation. In Thiobacillus denitrificans (strain ATCC 25259 / T1), this protein is Protein nucleotidyltransferase YdiU.